Here is a 339-residue protein sequence, read N- to C-terminus: Homeobox protein DBX2 (339 aa).

The homeobox DNA-binding region spans 186-245 (GILRRAVFSEDQRKALEKMFQKQKYISKTDRKKLAINLGLKESQVKIWFQNRRMKWRNSK). Residues 282 to 318 (VPQQHSSPRWRENSPEPSERLIQESSGAPPPEANSLQ) form a disordered region. Positions 290–303 (RWRENSPEPSERLI) are enriched in basic and acidic residues.

It belongs to the H2.0 homeobox family.

It localises to the nucleus. The protein is Homeobox protein DBX2 (DBX2) of Homo sapiens (Human).